A 530-amino-acid chain; its full sequence is Cytochrome P450 78A6 (530 aa).

A helical membrane pass occupies residues 25-45 (LAFSLLAVTIIWLAISLFLWT). Cys474 lines the heme pocket.

The protein belongs to the cytochrome P450 family. Requires heme as cofactor. In terms of tissue distribution, expressed in leaves, sepals, petals, stamens, carpels and developing ovules.

The protein resides in the membrane. Its function is as follows. Plays a role in seed and fruit development. Functions probably in association with CYP78A9 in the regulation of seed growth. Acts maternally to promote seed growth. The chain is Cytochrome P450 78A6 (CYP78A6) from Arabidopsis thaliana (Mouse-ear cress).